The primary structure comprises 262 residues: Malonyl-[acyl-carrier protein] O-methyltransferase (262 aa).

The protein belongs to the methyltransferase superfamily.

It catalyses the reaction malonyl-[ACP] + S-adenosyl-L-methionine = malonyl-[ACP] methyl ester + S-adenosyl-L-homocysteine. It participates in cofactor biosynthesis; biotin biosynthesis. Functionally, converts the free carboxyl group of a malonyl-thioester to its methyl ester by transfer of a methyl group from S-adenosyl-L-methionine (SAM). It allows to synthesize pimeloyl-ACP via the fatty acid synthetic pathway. This is Malonyl-[acyl-carrier protein] O-methyltransferase from Dechloromonas aromatica (strain RCB).